A 552-amino-acid chain; its full sequence is ATP synthase subunit alpha (552 aa).

173–180 provides a ligand contact to ATP; the sequence is GDRQTGKS. The tract at residues 509–552 is disordered; sequence KPQFSGGSKGSNVPKDVDAGATDADDISQEKITTRKGGATAARG.

The protein belongs to the ATPase alpha/beta chains family. In terms of assembly, F-type ATPases have 2 components, CF(1) - the catalytic core - and CF(0) - the membrane proton channel. CF(1) has five subunits: alpha(3), beta(3), gamma(1), delta(1), epsilon(1). CF(0) has three main subunits: a(1), b(2) and c(9-12). The alpha and beta chains form an alternating ring which encloses part of the gamma chain. CF(1) is attached to CF(0) by a central stalk formed by the gamma and epsilon chains, while a peripheral stalk is formed by the delta and b chains.

It is found in the cell membrane. The catalysed reaction is ATP + H2O + 4 H(+)(in) = ADP + phosphate + 5 H(+)(out). In terms of biological role, produces ATP from ADP in the presence of a proton gradient across the membrane. The alpha chain is a regulatory subunit. The chain is ATP synthase subunit alpha from Kineococcus radiotolerans (strain ATCC BAA-149 / DSM 14245 / SRS30216).